We begin with the raw amino-acid sequence, 220 residues long: Cytidylate kinase (220 aa).

10–18 (GPASSGKST) lines the ATP pocket.

Belongs to the cytidylate kinase family. Type 1 subfamily.

It is found in the cytoplasm. The enzyme catalyses CMP + ATP = CDP + ADP. It carries out the reaction dCMP + ATP = dCDP + ADP. The protein is Cytidylate kinase of Lactococcus lactis subsp. lactis (strain IL1403) (Streptococcus lactis).